A 234-amino-acid polypeptide reads, in one-letter code: Ubiquitin domain-containing protein 2 (234 aa).

Residues 1-46 (MGGCVGAQHDSSGSLNENSEGTGVALGRNQPLKKEKPKWKSDYPMT) form a disordered region. Over residues 9–21 (HDSSGSLNENSEG) the composition is skewed to polar residues. A compositionally biased stretch (basic and acidic residues) spans 32 to 41 (LKKEKPKWKS). A Ubiquitin-like domain is found at 152 to 227 (SQLRLRLSTG…VQVIMSQPLQ (76 aa)).

Its subcellular location is the cytoplasm. This Bos taurus (Bovine) protein is Ubiquitin domain-containing protein 2 (UBTD2).